The chain runs to 373 residues: Dual-specificity RNA methyltransferase RlmN (373 aa).

The active-site Proton acceptor is E94. A Radical SAM core domain is found at 100-339 (DGDRATLCVS…VTVRKTRGDD (240 aa)). A disulfide bridge connects residues C107 and C344. 3 residues coordinate [4Fe-4S] cluster: C114, C118, and C121. Residues 168–169 (GE), S200, 222–224 (SLH), and N301 contribute to the S-adenosyl-L-methionine site. C344 functions as the S-methylcysteine intermediate in the catalytic mechanism.

It belongs to the radical SAM superfamily. RlmN family. The cofactor is [4Fe-4S] cluster.

It localises to the cytoplasm. It catalyses the reaction adenosine(2503) in 23S rRNA + 2 reduced [2Fe-2S]-[ferredoxin] + 2 S-adenosyl-L-methionine = 2-methyladenosine(2503) in 23S rRNA + 5'-deoxyadenosine + L-methionine + 2 oxidized [2Fe-2S]-[ferredoxin] + S-adenosyl-L-homocysteine. The enzyme catalyses adenosine(37) in tRNA + 2 reduced [2Fe-2S]-[ferredoxin] + 2 S-adenosyl-L-methionine = 2-methyladenosine(37) in tRNA + 5'-deoxyadenosine + L-methionine + 2 oxidized [2Fe-2S]-[ferredoxin] + S-adenosyl-L-homocysteine. Specifically methylates position 2 of adenine 2503 in 23S rRNA and position 2 of adenine 37 in tRNAs. m2A2503 modification seems to play a crucial role in the proofreading step occurring at the peptidyl transferase center and thus would serve to optimize ribosomal fidelity. The protein is Dual-specificity RNA methyltransferase RlmN of Photobacterium profundum (strain SS9).